A 220-amino-acid polypeptide reads, in one-letter code: Histone H1B (220 aa).

Disordered stretches follow at residues 1-45 and 99-220; these read MTAT…PSAS and QVKG…APKK. Residues 28 to 45 show a composition bias toward low complexity; that stretch reads KKVAGGAKAKKPSGPSAS. The region spanning 40–113 is the H15 domain; the sequence is SGPSASELIV…GASGSFKLNK (74 aa). Composition is skewed to basic residues over residues 122–134, 141–151, 158–196, and 204–220; these read AAKKKPAAPKAKK, KAPKSPKKPKK, SPKKVKKLAKAAKSPKKPKAVKAKKVAKSPAKKATKPKT, and KVAKPKAAKAKKPAPKK.

Belongs to the histone H1/H5 family.

The protein localises to the nucleus. It is found in the chromosome. In terms of biological role, histones H1 are necessary for the condensation of nucleosome chains into higher-order structures. In Xenopus laevis (African clawed frog), this protein is Histone H1B.